The chain runs to 132 residues: Small ribosomal subunit protein uS15 (132 aa).

The protein belongs to the universal ribosomal protein uS15 family. Part of the 30S ribosomal subunit.

The protein is Small ribosomal subunit protein uS15 of Methanobrevibacter smithii (strain ATCC 35061 / DSM 861 / OCM 144 / PS).